Consider the following 196-residue polypeptide: Ribosome maturation factor RimP (196 aa).

Belongs to the RimP family.

The protein resides in the cytoplasm. Functionally, required for maturation of 30S ribosomal subunits. The chain is Ribosome maturation factor RimP from Dinoroseobacter shibae (strain DSM 16493 / NCIMB 14021 / DFL 12).